Reading from the N-terminus, the 624-residue chain is Na(+)/H(+) antiporter NhaA (624 aa).

The unknown stretch occupies residues 1–164 (MNPELPPNHL…TFFINGRRYD (164 aa)). The na(+)/H(+) antiporter NhaA stretch occupies residues 165 to 624 (GPWDVRSLSE…NAQAEEEKNP (460 aa)). 11 helical membrane-spanning segments follow: residues 199–219 (GIML…ALGP), 240–260 (LSLR…VVGL), 279–299 (LPIA…LILV), 319–339 (GWGV…AMMG), 348–368 (VFLT…VAIF), 371–391 (GELH…LALL), 407–427 (IVLW…GIIL), 497–517 (FLVL…TSVF), 521–541 (IPLM…GFIT), 565–585 (GAGA…SQAF), and 596–616 (IAIF…LWNA).

Belongs to the NhaA Na(+)/H(+) (TC 2.A.33) antiporter family.

It localises to the cell inner membrane. The catalysed reaction is Na(+)(in) + 2 H(+)(out) = Na(+)(out) + 2 H(+)(in). In terms of biological role, na(+)/H(+) antiporter that extrudes sodium in exchange for external protons. This is Na(+)/H(+) antiporter NhaA from Nitrosospira multiformis (strain ATCC 25196 / NCIMB 11849 / C 71).